A 478-amino-acid chain; its full sequence is Proline--tRNA ligase (478 aa).

This sequence belongs to the class-II aminoacyl-tRNA synthetase family. ProS type 3 subfamily. Homodimer.

The protein localises to the cytoplasm. The enzyme catalyses tRNA(Pro) + L-proline + ATP = L-prolyl-tRNA(Pro) + AMP + diphosphate. In terms of biological role, catalyzes the attachment of proline to tRNA(Pro) in a two-step reaction: proline is first activated by ATP to form Pro-AMP and then transferred to the acceptor end of tRNA(Pro). In Methanothrix thermoacetophila (strain DSM 6194 / JCM 14653 / NBRC 101360 / PT) (Methanosaeta thermophila), this protein is Proline--tRNA ligase.